We begin with the raw amino-acid sequence, 1050 residues long: uncharacterized protein (1050 aa).

Over 1–83 (MARLLTKSSQ…AVKLGTFEGC (83 aa)) the chain is Cytoplasmic. Residues S9 and S60 each carry the phosphoserine modification. T64 bears the Phosphothreonine mark. The helical transmembrane segment at 84 to 104 (FIPTTLNVLSILLYLRFPWII) threads the bilayer. Over 105-112 (GEAGVLKT) the chain is Extracellular. The helical transmembrane segment at 113 to 133 (LLMLFISYAVGIFTSLSISAI) threads the bilayer. Topologically, residues 134–146 (CTNGMVRGGGAYY) are cytoplasmic. Residues 147–169 (AVSRSIGPELGGSIGLIFYVGQI) form a helical membrane-spanning segment. Residues 170–202 (LNTGMNISGFVEPIISIFGKESGTISQFLPEGY) are Extracellular-facing. N175 is a glycosylation site (N-linked (GlcNAc...) asparagine). Residues 203–223 (WWVFLYTTCVLAMCCILCCLG) traverse the membrane as a helical segment. Residues 224 to 232 (SAIFAKASN) lie on the Cytoplasmic side of the membrane. The chain crosses the membrane as a helical span at residues 233–253 (ALFVVIILSTISIPISSIFVH). Residues 254-295 (PFKDPSLLVHFTGLKWSTLMKNLASAYTENEKGTGYESFKST) lie on the Extracellular side of the membrane. A Phosphoserine modification is found at S270. Phosphothreonine is present on T271. A helical membrane pass occupies residues 296–316 (FGVFFPATAGLLAGASMSGDL). Over 317-334 (KAPSRSIPKGTISSQATT) the chain is Cytoplasmic. The chain crosses the membrane as a helical span at residues 335-355 (FLLYLLVILCVGASVTRTGLL). At 356–368 (LDMDVMEHISLHP) the chain is on the extracellular side. A helical membrane pass occupies residues 369-389 (LFIISGILSSGAFSSFMGIFG). Residues 390–417 (AAKLLQAIARDDLIPGMFFFAKGSSYDD) lie on the Cytoplasmic side of the membrane. A helical transmembrane segment spans residues 418–438 (IPYVAIGVTYLITQISLFWDI). Residues 439-442 (NMLS) lie on the Extracellular side of the membrane. The helical transmembrane segment at 443–463 (SMITMTFLLTFGFINLSCFLL) threads the bilayer. At 464 to 480 (RISSTPNFRPTFRYFNR) the chain is on the cytoplasmic side. The helical transmembrane segment at 481–497 (RTTLVGTILSFGVMFYV) threads the bilayer. The Extracellular segment spans residues 498 to 499 (DR). A helical membrane pass occupies residues 500-520 (LNAFISFLIAGILVVVIYFTC). At 521-1050 (PPKNWGDVSQ…SKSLTITTAL (530 aa)) the chain is on the cytoplasmic side. The residue at position 901 (S901) is a Phosphoserine. Residues 915-943 (ETESSFGNRSLSPKQENRRTYSDSTIESS) form a disordered region. The span at 916 to 928 (TESSFGNRSLSPK) shows a compositional bias: polar residues. S936 is subject to Phosphoserine. T939 is subject to Phosphothreonine.

It belongs to the SLC12A transporter family.

It localises to the membrane. This is an uncharacterized protein from Schizosaccharomyces pombe (strain 972 / ATCC 24843) (Fission yeast).